We begin with the raw amino-acid sequence, 174 residues long: Dual-action ribosomal maturation protein DarP (174 aa).

Belongs to the DarP family.

It localises to the cytoplasm. Its function is as follows. Member of a network of 50S ribosomal subunit biogenesis factors which assembles along the 30S-50S interface, preventing incorrect 23S rRNA structures from forming. Promotes peptidyl transferase center (PTC) maturation. The protein is Dual-action ribosomal maturation protein DarP of Pseudomonas aeruginosa (strain LESB58).